A 217-amino-acid chain; its full sequence is Ribose-5-phosphate isomerase A (217 aa).

Substrate is bound by residues 28-31 (TGST), 81-84 (DGAD), and 94-97 (KGGG). E103 acts as the Proton acceptor in catalysis. K121 serves as a coordination point for substrate.

Belongs to the ribose 5-phosphate isomerase family. Homodimer.

The enzyme catalyses aldehydo-D-ribose 5-phosphate = D-ribulose 5-phosphate. The protein operates within carbohydrate degradation; pentose phosphate pathway; D-ribose 5-phosphate from D-ribulose 5-phosphate (non-oxidative stage): step 1/1. Catalyzes the reversible conversion of ribose-5-phosphate to ribulose 5-phosphate. This Aeromonas salmonicida (strain A449) protein is Ribose-5-phosphate isomerase A.